The following is a 143-amino-acid chain: Small ribosomal subunit protein eS19x (143 aa).

It belongs to the eukaryotic ribosomal protein eS19 family.

This Arabidopsis thaliana (Mouse-ear cress) protein is Small ribosomal subunit protein eS19x (RPS19C).